The primary structure comprises 339 residues: UDP-N-acetylglucosamine--N-acetylmuramyl-(pentapeptide) pyrophosphoryl-undecaprenol N-acetylglucosamine transferase (339 aa).

UDP-N-acetyl-alpha-D-glucosamine contacts are provided by residues 11–13 (TGG), Asn-127, Arg-170, Ser-188, Ile-235, and Gln-280.

The protein belongs to the glycosyltransferase 28 family. MurG subfamily.

The protein localises to the cell inner membrane. The enzyme catalyses di-trans,octa-cis-undecaprenyl diphospho-N-acetyl-alpha-D-muramoyl-L-alanyl-D-glutamyl-meso-2,6-diaminopimeloyl-D-alanyl-D-alanine + UDP-N-acetyl-alpha-D-glucosamine = di-trans,octa-cis-undecaprenyl diphospho-[N-acetyl-alpha-D-glucosaminyl-(1-&gt;4)]-N-acetyl-alpha-D-muramoyl-L-alanyl-D-glutamyl-meso-2,6-diaminopimeloyl-D-alanyl-D-alanine + UDP + H(+). The protein operates within cell wall biogenesis; peptidoglycan biosynthesis. Its function is as follows. Cell wall formation. Catalyzes the transfer of a GlcNAc subunit on undecaprenyl-pyrophosphoryl-MurNAc-pentapeptide (lipid intermediate I) to form undecaprenyl-pyrophosphoryl-MurNAc-(pentapeptide)GlcNAc (lipid intermediate II). The protein is UDP-N-acetylglucosamine--N-acetylmuramyl-(pentapeptide) pyrophosphoryl-undecaprenol N-acetylglucosamine transferase of Thermotoga maritima (strain ATCC 43589 / DSM 3109 / JCM 10099 / NBRC 100826 / MSB8).